Here is a 689-residue protein sequence, read N- to C-terminus: Glycine--tRNA ligase beta subunit (689 aa).

The protein belongs to the class-II aminoacyl-tRNA synthetase family. As to quaternary structure, tetramer of two alpha and two beta subunits.

Its subcellular location is the cytoplasm. It catalyses the reaction tRNA(Gly) + glycine + ATP = glycyl-tRNA(Gly) + AMP + diphosphate. The polypeptide is Glycine--tRNA ligase beta subunit (Pectobacterium carotovorum subsp. carotovorum (strain PC1)).